The sequence spans 151 residues: 6,7-dimethyl-8-ribityllumazine synthase (151 aa).

5-amino-6-(D-ribitylamino)uracil contacts are provided by residues Phe-15, 49 to 51 (AVE), and 73 to 75 (AVI). A (2S)-2-hydroxy-3-oxobutyl phosphate-binding site is contributed by 78–79 (ET). His-81 (proton donor) is an active-site residue. Phe-106 is a 5-amino-6-(D-ribitylamino)uracil binding site. Arg-120 is a (2S)-2-hydroxy-3-oxobutyl phosphate binding site.

This sequence belongs to the DMRL synthase family. As to quaternary structure, forms an icosahedral capsid composed of 60 subunits, arranged as a dodecamer of pentamers.

The catalysed reaction is (2S)-2-hydroxy-3-oxobutyl phosphate + 5-amino-6-(D-ribitylamino)uracil = 6,7-dimethyl-8-(1-D-ribityl)lumazine + phosphate + 2 H2O + H(+). It functions in the pathway cofactor biosynthesis; riboflavin biosynthesis; riboflavin from 2-hydroxy-3-oxobutyl phosphate and 5-amino-6-(D-ribitylamino)uracil: step 1/2. Its function is as follows. Catalyzes the formation of 6,7-dimethyl-8-ribityllumazine by condensation of 5-amino-6-(D-ribitylamino)uracil with 3,4-dihydroxy-2-butanone 4-phosphate. This is the penultimate step in the biosynthesis of riboflavin. The chain is 6,7-dimethyl-8-ribityllumazine synthase from Coxiella burnetii (strain Dugway 5J108-111).